A 127-amino-acid polypeptide reads, in one-letter code: Aspartate 1-decarboxylase (127 aa).

Ser25 serves as the catalytic Schiff-base intermediate with substrate; via pyruvic acid. The residue at position 25 (Ser25) is a Pyruvic acid (Ser). Thr57 contacts substrate. Tyr58 serves as the catalytic Proton donor. Gly73–Ala75 serves as a coordination point for substrate.

Belongs to the PanD family. Heterooctamer of four alpha and four beta subunits. It depends on pyruvate as a cofactor. Post-translationally, is synthesized initially as an inactive proenzyme, which is activated by self-cleavage at a specific serine bond to produce a beta-subunit with a hydroxyl group at its C-terminus and an alpha-subunit with a pyruvoyl group at its N-terminus.

It localises to the cytoplasm. It catalyses the reaction L-aspartate + H(+) = beta-alanine + CO2. Its pathway is cofactor biosynthesis; (R)-pantothenate biosynthesis; beta-alanine from L-aspartate: step 1/1. Its function is as follows. Catalyzes the pyruvoyl-dependent decarboxylation of aspartate to produce beta-alanine. The protein is Aspartate 1-decarboxylase of Trichormus variabilis (strain ATCC 29413 / PCC 7937) (Anabaena variabilis).